The sequence spans 102 residues: Small ribosomal subunit protein uS10 (102 aa).

Belongs to the universal ribosomal protein uS10 family. Part of the 30S ribosomal subunit.

In terms of biological role, involved in the binding of tRNA to the ribosomes. The polypeptide is Small ribosomal subunit protein uS10 (Leifsonia xyli subsp. xyli (strain CTCB07)).